The primary structure comprises 177 residues: SPbeta prophage-derived uncharacterized N-acetyltransferase YokL (177 aa).

The region spanning Leu11–Glu170 is the N-acetyltransferase domain.

The protein belongs to the acetyltransferase family.

In Bacillus subtilis (strain 168), this protein is SPbeta prophage-derived uncharacterized N-acetyltransferase YokL (yokL).